Reading from the N-terminus, the 471-residue chain is GDP-fucose protein O-fucosyltransferase 3 (471 aa).

The Cytoplasmic portion of the chain corresponds to 1-8 (MNRMWEKK). The chain crosses the membrane as a helical; Signal-anchor for type II membrane protein span at residues 9–29 (FWISCFFIILFFILVTLQVMV). Topologically, residues 30–471 (ELGRFEKRET…EFWNLVFKFQ (442 aa)) are lumenal. Residues N102, N122, N160, and N310 are each glycosylated (N-linked (GlcNAc...) asparagine). The cysteines at positions 381 and 384 are disulfide-linked. The N-linked (GlcNAc...) asparagine glycan is linked to N457.

The protein belongs to the glycosyltransferase 10 family.

The protein localises to the endoplasmic reticulum membrane. The catalysed reaction is L-threonyl-[protein] + GDP-beta-L-fucose = 3-O-(alpha-L-fucosyl)-L-threonyl-[protein] + GDP + H(+). The enzyme catalyses L-seryl-[protein] + GDP-beta-L-fucose = 3-O-(alpha-L-fucosyl)-L-seryl-[protein] + GDP + H(+). It functions in the pathway protein modification; protein glycosylation. In terms of biological role, protein O-fucosyltransferase that specifically catalyzes O-fucosylation of serine or threonine residues in EMI domains of target proteins. Attaches fucose through an O-glycosidic linkage. O-fucosylation of EMI domain-containing proteins may be required for facilitating protein folding and secretion. In Xenopus tropicalis (Western clawed frog), this protein is GDP-fucose protein O-fucosyltransferase 3 (fut10).